The sequence spans 156 residues: Arginine repressor (156 aa).

It belongs to the ArgR family.

It is found in the cytoplasm. It functions in the pathway amino-acid biosynthesis; L-arginine biosynthesis [regulation]. Functionally, regulates arginine biosynthesis genes. The chain is Arginine repressor from Shewanella sediminis (strain HAW-EB3).